Here is a 340-residue protein sequence, read N- to C-terminus: Methionine import ATP-binding protein MetN 2 (340 aa).

An ABC transporter domain is found at isoleucine 2–valine 241. Glycine 38–serine 45 contributes to the ATP binding site.

The protein belongs to the ABC transporter superfamily. Methionine importer (TC 3.A.1.24) family. The complex is composed of two ATP-binding proteins (MetN), two transmembrane proteins (MetI) and a solute-binding protein (MetQ).

The protein localises to the cell membrane. It carries out the reaction L-methionine(out) + ATP + H2O = L-methionine(in) + ADP + phosphate + H(+). The enzyme catalyses D-methionine(out) + ATP + H2O = D-methionine(in) + ADP + phosphate + H(+). In terms of biological role, part of the ABC transporter complex MetNIQ involved in methionine import. Responsible for energy coupling to the transport system. This is Methionine import ATP-binding protein MetN 2 from Listeria innocua serovar 6a (strain ATCC BAA-680 / CLIP 11262).